The following is a 199-amino-acid chain: Recombination protein RecR (199 aa).

The segment at 57–72 (CSICGNFTDRDPCRLC) adopts a C4-type zinc-finger fold. A Toprim domain is found at 80 to 175 (SCICVVEEAR…KVTRLAYGLP (96 aa)).

It belongs to the RecR family.

In terms of biological role, may play a role in DNA repair. It seems to be involved in an RecBC-independent recombinational process of DNA repair. It may act with RecF and RecO. The sequence is that of Recombination protein RecR from Moorella thermoacetica (strain ATCC 39073 / JCM 9320).